The primary structure comprises 388 residues: MPERRELREPPMPPSMARVRGRKLRTGWTTGTCAAAAAKAAARALASGEAQEMVEVRLPGRGEGRRVRFGVERCELGEGWAEAVVVKDAGDDPDVTHGAHLTARVSWREEPGVELDRGEGVGVVTKPGLGLPVGAPAINPVPRRMILYSLEEALDTRRRGVRVVISVPGGEEMARKTTNPRLGIVGGISILGTTGIVRPFSTAAWAASVVQAIDVVAAQGGDTFVLSTGGLTERAAMRLLPHLEEVCFIEVGDFTGQAVRRAAKRGLGRGFFVGMAGKLAKLASGVMMTHWTRSRVDTSLLAEITRKAGGSERLAEEVEGANSARHAYELWRAAGLSGAPRLLCARVAENLREHAGGALEMHAIMVDFDTLEPVGASPGALELTAWRG.

Belongs to the CbiD family.

The catalysed reaction is Co-precorrin-5B + S-adenosyl-L-methionine = Co-precorrin-6A + S-adenosyl-L-homocysteine. It participates in cofactor biosynthesis; adenosylcobalamin biosynthesis; cob(II)yrinate a,c-diamide from sirohydrochlorin (anaerobic route): step 6/10. Its function is as follows. Catalyzes the methylation of C-1 in cobalt-precorrin-5B to form cobalt-precorrin-6A. The sequence is that of Cobalt-precorrin-5B C(1)-methyltransferase from Rubrobacter xylanophilus (strain DSM 9941 / JCM 11954 / NBRC 16129 / PRD-1).